The following is an 881-amino-acid chain: DNA mismatch repair protein MutS (881 aa).

Residue 626 to 633 coordinates ATP; sequence GPNMAGKS.

The protein belongs to the DNA mismatch repair MutS family.

Its function is as follows. This protein is involved in the repair of mismatches in DNA. It is possible that it carries out the mismatch recognition step. This protein has a weak ATPase activity. This is DNA mismatch repair protein MutS from Desulfosudis oleivorans (strain DSM 6200 / JCM 39069 / Hxd3) (Desulfococcus oleovorans).